Reading from the N-terminus, the 833-residue chain is Serine/threonine-protein phosphatase 4 regulatory subunit 3A (833 aa).

The WH1 domain maps to 1-100 (MTDTRRRVKV…DEIWEKICQV (100 aa)). Residues S117 and S127 each carry the phosphoserine modification. K655 is modified (N6-acetyllysine). Acidic residues predominate over residues 683 to 694 (FNTDEDDMEDGE). Disordered regions lie at residues 683–712 (FNTD…IMDP) and 733–833 (KTNL…KFDS). Residues S698, S741, S768, S771, S774, S777, and S780 each carry the phosphoserine modification. Residues 734–751 (TNLSGRQSPSFKLSLSSG) are compositionally biased toward polar residues. Residues 752 to 768 (TKTNLTSQSSTTNLPGS) show a composition bias toward low complexity. The span at 785 to 794 (PKNTSQTAAI) shows a compositional bias: polar residues. Residues 806 to 820 (YPDDDEDDDEDEDKE) show a composition bias toward acidic residues.

It belongs to the SMEK family. Serine/threonine-protein phosphatase 4 (PP4) occurs in different assemblies of the catalytic and one or more regulatory subunits. Component of the PP4 complex PPP4C-PPP4R2-PPP4R3A. Interacts with PPP4C; the interaction requires PPP4R2.

The protein localises to the cytoplasm. It localises to the cytoskeleton. Its subcellular location is the microtubule organizing center. It is found in the centrosome. The protein resides in the nucleus. Its function is as follows. Regulatory subunit of serine/threonine-protein phosphatase 4. May regulate the activity of PPP4C at centrosomal microtubule organizing centers. The PPP4C-PPP4R2-PPP4R3A PP4 complex specifically dephosphorylates H2AX phosphorylated on 'Ser-140' (gamma-H2AX) generated during DNA replication and required for DNA DSB repair. This chain is Serine/threonine-protein phosphatase 4 regulatory subunit 3A, found in Homo sapiens (Human).